Reading from the N-terminus, the 221-residue chain is MTSQRFQELLKNVKTNLGSVWVEFRSSVEERLKHPHIWKIIDREQLATILMFFLGIPKMFRLSQNMKIRQMRNMRKPGVMEMTPDTNQTEQPCPSQMTNTETSKEPESVSLNSSTKDGDLDPNKQMKNLRRDSSSSQESADLEEDHRMLGGRMRMIFKRRQGMRKKSQSLSHLRSQAVYQDTTEAAISPSTWKSFWPPQLRLRDDNSWSSVNLSQTDPTKN.

2 disordered regions span residues 75–149 (RKPG…HRML) and 183–221 (TEAA…PTKN). The segment covering 84 to 101 (PDTNQTEQPCPSQMTNTE) has biased composition (polar residues). Residues 116–133 (KDGDLDPNKQMKNLRRDS) show a composition bias toward basic and acidic residues. Composition is skewed to polar residues over residues 183–193 (TEAAISPSTWK) and 207–221 (SWSS…PTKN).

Functionally, does not belong to rhabdoviridae replication core genes, and is specific to sigma virus: protein C is presumably involved in host-virus interactions. This Tupaia (TUPV) protein is Protein C.